The following is a 310-amino-acid chain: Zinc finger protein-like 1 (310 aa).

The B box-type; degenerate zinc finger occupies 1-43; the sequence is MGLCKCPKRKVTNLFCFEHRVNVCEHCLVANHAKCIVQSYLQW. Over 1 to 266 the chain is Cytoplasmic; that stretch reads MGLCKCPKRK…RPLTLLQRAG (266 aa). An RING-type; degenerate zinc finger spans residues 53–101; sequence CRLCNIPLASRETTRLVCYDLFHWACLNERAAQLPRNTAPAGYQCPSCN. The tract at residues 145–231 is disordered; it reads PEPLNTSDFS…RTPGLHGDCD (87 aa). Over residues 148 to 165 the composition is skewed to polar residues; sequence LNTSDFSDWSSFNASSTP. Basic and acidic residues predominate over residues 213 to 224; it reads KVYDTRDDDRTP. Residues 267–287 form a helical membrane-spanning segment; sequence LLLLLGLLGFLALLALMSRLG. Residues 288–310 lie on the Lumenal side of the membrane; the sequence is RAAADSDPNLDPLMNPHIRVGPS.

Belongs to the ZFPL1 family. As to quaternary structure, interacts with GOLGA2/GM130. In terms of processing, phosphorylated. As to expression, expressed strongly in the exocrine pancreas.

The protein localises to the golgi apparatus. Its subcellular location is the cis-Golgi network membrane. Required for cis-Golgi integrity and efficient ER to Golgi transport. Involved in the maintenance of the integrity of the cis-Golgi, possibly via its interaction with GOLGA2/GM130. The polypeptide is Zinc finger protein-like 1 (ZFPL1) (Homo sapiens (Human)).